The chain runs to 591 residues: Aspartate--tRNA ligase (591 aa).

Glu-171 lines the L-aspartate pocket. The segment at 195–198 (QLFK) is aspartate. An L-aspartate-binding site is contributed by Arg-217. ATP is bound by residues 217–219 (RDE) and Gln-226. His-448 contacts L-aspartate. ATP is bound at residue Glu-482. An L-aspartate-binding site is contributed by Arg-489. Residue 534-537 (GLDR) participates in ATP binding.

This sequence belongs to the class-II aminoacyl-tRNA synthetase family. Type 1 subfamily. Homodimer.

The protein resides in the cytoplasm. It catalyses the reaction tRNA(Asp) + L-aspartate + ATP = L-aspartyl-tRNA(Asp) + AMP + diphosphate. Functionally, catalyzes the attachment of L-aspartate to tRNA(Asp) in a two-step reaction: L-aspartate is first activated by ATP to form Asp-AMP and then transferred to the acceptor end of tRNA(Asp). This is Aspartate--tRNA ligase from Aliivibrio fischeri (strain MJ11) (Vibrio fischeri).